Consider the following 218-residue polypeptide: Glutathione S-transferase (218 aa).

In terms of domain architecture, GST N-terminal spans Ser-3–Gly-88. Residues Tyr-9–Trp-10, Arg-43–Trp-46, Lys-50, Asn-59–Leu-60, and Gln-72–Thr-73 contribute to the glutathione site. In terms of domain architecture, GST C-terminal spans Asn-90–Phe-206. Substrate is bound at residue Tyr-116.

It belongs to the GST superfamily. Mu family.

It carries out the reaction RX + glutathione = an S-substituted glutathione + a halide anion + H(+). In terms of biological role, conjugation of reduced glutathione to a wide number of exogenous and endogenous hydrophobic electrophiles. The sequence is that of Glutathione S-transferase from Tyrophagus putrescentiae (Mold mite).